Here is a 192-residue protein sequence, read N- to C-terminus: uncharacterized protein (192 aa).

This is an uncharacterized protein from Methanocaldococcus jannaschii (strain ATCC 43067 / DSM 2661 / JAL-1 / JCM 10045 / NBRC 100440) (Methanococcus jannaschii).